Consider the following 689-residue polypeptide: Glycine--tRNA ligase beta subunit (689 aa).

This sequence belongs to the class-II aminoacyl-tRNA synthetase family. As to quaternary structure, tetramer of two alpha and two beta subunits.

The protein resides in the cytoplasm. The enzyme catalyses tRNA(Gly) + glycine + ATP = glycyl-tRNA(Gly) + AMP + diphosphate. The sequence is that of Glycine--tRNA ligase beta subunit from Klebsiella pneumoniae (strain 342).